The following is a 348-amino-acid chain: Erythronate-4-phosphate dehydrogenase (348 aa).

Thr-46 and Thr-67 together coordinate substrate. Asp-147 contacts NAD(+). Arg-209 is an active-site residue. Asp-233 serves as a coordination point for NAD(+). Glu-238 is a catalytic residue. His-255 serves as the catalytic Proton donor. NAD(+) is bound at residue Gly-258. Substrate is bound at residue Tyr-259.

The protein belongs to the D-isomer specific 2-hydroxyacid dehydrogenase family. PdxB subfamily. In terms of assembly, homodimer.

The protein resides in the cytoplasm. The catalysed reaction is 4-phospho-D-erythronate + NAD(+) = (R)-3-hydroxy-2-oxo-4-phosphooxybutanoate + NADH + H(+). It participates in cofactor biosynthesis; pyridoxine 5'-phosphate biosynthesis; pyridoxine 5'-phosphate from D-erythrose 4-phosphate: step 2/5. Its function is as follows. Catalyzes the oxidation of erythronate-4-phosphate to 3-hydroxy-2-oxo-4-phosphonooxybutanoate. The sequence is that of Erythronate-4-phosphate dehydrogenase from Bacteroides fragilis (strain YCH46).